Consider the following 223-residue polypeptide: Imidazoleglycerol-phosphate dehydratase (223 aa).

Belongs to the imidazoleglycerol-phosphate dehydratase family.

It carries out the reaction D-erythro-1-(imidazol-4-yl)glycerol 3-phosphate = 3-(imidazol-4-yl)-2-oxopropyl phosphate + H2O. It functions in the pathway amino-acid biosynthesis; L-histidine biosynthesis; L-histidine from 5-phospho-alpha-D-ribose 1-diphosphate: step 6/9. This Candida albicans (Yeast) protein is Imidazoleglycerol-phosphate dehydratase (HIS3).